We begin with the raw amino-acid sequence, 444 residues long: Gustatory receptor 5a for trehalose (444 aa).

The Cytoplasmic segment spans residues methionine 1–alanine 56. A helical membrane pass occupies residues valine 57–alanine 77. The Extracellular segment spans residues proline 78–leucine 178. A helical transmembrane segment spans residues valine 179–valine 199. Topologically, residues tyrosine 200–tyrosine 214 are cytoplasmic. Residues leucine 215–leucine 235 traverse the membrane as a helical segment. Over glycine 236 to asparagine 240 the chain is Extracellular. Residues valine 241–leucine 261 traverse the membrane as a helical segment. Residues serine 262–alanine 305 lie on the Cytoplasmic side of the membrane. A helical transmembrane segment spans residues valine 306 to leucine 326. At lysine 327–alanine 338 the chain is on the extracellular side. The chain crosses the membrane as a helical span at residues valine 339 to valine 359. At serine 360–lysine 410 the chain is on the cytoplasmic side. The chain crosses the membrane as a helical span at residues leucine 411 to glutamate 431. Residues aspartate 432–aspartate 444 are Extracellular-facing.

This sequence belongs to the insect chemoreceptor superfamily. Gustatory receptor (GR) family. Gr5a subfamily. Expressed in labellar chemosensory neurons.

It is found in the cell membrane. Its function is as follows. Gustatory receptor required for response to the sugar trehalose in taste neurons. Gr5a neurons selectively respond to sugars, in contrast to Gr66a cells which respond to bitter compounds. Flies are attracted to sugars and avoid bitter substances, suggesting that Gr5a neuron activity is sufficient to mediate acceptance behavior. Sugar signal transduction occurs through coupling with G-proteins such as Galpha49B and G-salpha60A. In Drosophila melanogaster (Fruit fly), this protein is Gustatory receptor 5a for trehalose (Gr5a).